Here is a 344-residue protein sequence, read N- to C-terminus: NDP-polyphosphate phosphotransferase 2 (344 aa).

Residues M1–P60 form a disordered region.

It belongs to the polyphosphate kinase 2 (PPK2) family. Class I subfamily. Mg(2+) serves as cofactor.

The catalysed reaction is [phosphate](n) + ATP = [phosphate](n+1) + ADP. It carries out the reaction [phosphate](n) + CTP = [phosphate](n+1) + CDP. The enzyme catalyses [phosphate](n) + GTP = [phosphate](n+1) + GDP. It catalyses the reaction [phosphate](n) + UTP = [phosphate](n+1) + UDP. Functionally, uses inorganic polyphosphate (polyP) as a donor to convert NDP to NTP. PolyP hydrolysis is slightly faster with ADP, but it can also use GDP, CDP and UDP. In Ruegeria pomeroyi (strain ATCC 700808 / DSM 15171 / DSS-3) (Silicibacter pomeroyi), this protein is NDP-polyphosphate phosphotransferase 2.